The primary structure comprises 114 residues: Large ribosomal subunit protein bL20 (114 aa).

Belongs to the bacterial ribosomal protein bL20 family.

Functionally, binds directly to 23S ribosomal RNA and is necessary for the in vitro assembly process of the 50S ribosomal subunit. It is not involved in the protein synthesizing functions of that subunit. This is Large ribosomal subunit protein bL20 from Anaeromyxobacter dehalogenans (strain 2CP-1 / ATCC BAA-258).